A 147-amino-acid polypeptide reads, in one-letter code: UPF0306 protein YhbP (147 aa).

This sequence belongs to the UPF0306 family.

The polypeptide is UPF0306 protein YhbP (Escherichia coli O8 (strain IAI1)).